The chain runs to 599 residues: Proline dehydrogenase 1, mitochondrial (599 aa).

2 disordered regions span residues 20 to 39 and 152 to 180; these read STKP…LRGC and EEAE…EKQY. The span at 23-39 shows a compositional bias: low complexity; the sequence is PQAQEQPPASPEALRGC. Residues 153 to 180 show a composition bias toward basic and acidic residues; the sequence is EAERKEMESCTSEAERDGSGANKREKQY. N6-acetyllysine is present on residues Lys356, Lys367, and Lys485.

It belongs to the proline oxidase family. The cofactor is FAD. Expressed in liver, kidney, heart and to a lesser extent in brain, lung and muscle.

It localises to the mitochondrion matrix. The enzyme catalyses L-proline + a quinone = (S)-1-pyrroline-5-carboxylate + a quinol + H(+). Its pathway is amino-acid degradation; L-proline degradation into L-glutamate; L-glutamate from L-proline: step 1/2. Functionally, converts proline to delta-1-pyrroline-5-carboxylate. This is Proline dehydrogenase 1, mitochondrial (Prodh) from Mus musculus (Mouse).